We begin with the raw amino-acid sequence, 351 residues long: S-adenosylmethionine:tRNA ribosyltransferase-isomerase (351 aa).

This sequence belongs to the QueA family. In terms of assembly, monomer.

The protein localises to the cytoplasm. It catalyses the reaction 7-aminomethyl-7-carbaguanosine(34) in tRNA + S-adenosyl-L-methionine = epoxyqueuosine(34) in tRNA + adenine + L-methionine + 2 H(+). Its pathway is tRNA modification; tRNA-queuosine biosynthesis. Functionally, transfers and isomerizes the ribose moiety from AdoMet to the 7-aminomethyl group of 7-deazaguanine (preQ1-tRNA) to give epoxyqueuosine (oQ-tRNA). The polypeptide is S-adenosylmethionine:tRNA ribosyltransferase-isomerase (Phocaeicola vulgatus (strain ATCC 8482 / DSM 1447 / JCM 5826 / CCUG 4940 / NBRC 14291 / NCTC 11154) (Bacteroides vulgatus)).